Here is a 290-residue protein sequence, read N- to C-terminus: 4-hydroxybenzoate octaprenyltransferase (290 aa).

Helical transmembrane passes span 21-41 (IGTL…VKGM), 44-64 (LSIL…GCVI), 84-104 (LATG…LVFC), 106-126 (FILV…AVFL), 142-162 (LFLG…SIEA), 212-232 (IISL…YLSQ), 235-255 (TSYF…CKLI), and 267-287 (FLNN…GIFF).

This sequence belongs to the UbiA prenyltransferase family. Mg(2+) serves as cofactor.

It is found in the cell inner membrane. The enzyme catalyses all-trans-octaprenyl diphosphate + 4-hydroxybenzoate = 4-hydroxy-3-(all-trans-octaprenyl)benzoate + diphosphate. It participates in cofactor biosynthesis; ubiquinone biosynthesis. Functionally, catalyzes the prenylation of para-hydroxybenzoate (PHB) with an all-trans polyprenyl group. Mediates the second step in the final reaction sequence of ubiquinone-8 (UQ-8) biosynthesis, which is the condensation of the polyisoprenoid side chain with PHB, generating the first membrane-bound Q intermediate 3-octaprenyl-4-hydroxybenzoate. In Pasteurella multocida (strain Pm70), this protein is 4-hydroxybenzoate octaprenyltransferase.